The chain runs to 512 residues: Protein OS-9 homolog (512 aa).

The first 17 residues, 1–17, serve as a signal peptide directing secretion; sequence MRRFNLILLASLQLVGA. Residues 71–91 are disordered; sequence QAREADARDNEAENKDQDGPS. Residues 73–88 are compositionally biased toward basic and acidic residues; that stretch reads READARDNEAENKDQD. N-linked (GlcNAc...) asparagine glycosylation is present at Asn118. Positions 149–288 constitute an MRH domain; it reads DSCLYFMSGW…VVNTPRLCND (140 aa). Cys151 and Cys164 are joined by a disulfide. A mannooligosaccharide derivative-binding residues include Trp158, Trp159, Gln171, Asp242, Arg248, Glu270, and Tyr276. Disulfide bonds link Cys241/Cys274 and Cys256/Cys286. Disordered stretches follow at residues 329–349 and 485–512; these read QVPL…PRDV and AAAK…KDEL. Over residues 492-504 the composition is skewed to acidic residues; it reads DDEEEVVEGSEEQ. A Prevents secretion from ER motif is present at residues 509–512; the sequence is KDEL.

The protein belongs to the OS-9 family. As to quaternary structure, interacts with missfolded ER lumenal proteins.

Its subcellular location is the endoplasmic reticulum membrane. Lectin involved in the quality control of the secretory pathway. As a member of the endoplasmic reticulum-associated degradation lumenal (ERAD-L) surveillance system, targets misfolded endoplasmic reticulum lumenal glycoproteins for degradation. The chain is Protein OS-9 homolog (YOS1) from Gibberella zeae (strain ATCC MYA-4620 / CBS 123657 / FGSC 9075 / NRRL 31084 / PH-1) (Wheat head blight fungus).